Consider the following 374-residue polypeptide: Multicilin (374 aa).

Residues 164-212 adopt a coiled-coil conformation; it reads EQYWRDVADHNQKALGDALVENNQLQVSLTEKQEEIVSLKEKNIQLNEL. The tract at residues 230 to 260 is disordered; sequence RTKQNSGATQGRLPVKRSLEDFYPQSNEPDS. A TIRT domain region spans residues 330–374; it reads TDLEDVSFRTSIKEHSTIRTLAFPQGNAFTIRTSGGGYKFRWVPN.

Belongs to the geminin family. Component of the EDM complex, at least composed of e2f4, e2f5, mcidas and tfdp1. As to expression, expressed in multiciliate differentiating cells. Expression is lost by stage 26, when multiciliate cells in the skin are fully differentiated, but is then detected in the developing nephrostomes of the kidneys where multiciliate cells form at later stages.

The protein resides in the nucleus. Functionally, transcription regulator specifically required for multiciliate cell differentiation. Acts in a multiprotein complex containing E2F4 and E2F5 that binds and activates genes required for centriole biogenesis. Activates genes required for centriole assembly (plk4, cep152) and genes specifically required for motile cilia formation (foxj1). Also promotes the deuterosome pathway of centriole biogenesis by activating expression of ccdc67/deup1, but not its paralog cep63. In Xenopus laevis (African clawed frog), this protein is Multicilin (mcidas).